The chain runs to 1251 residues: Probable transcription factor TDA9 (1251 aa).

2 consecutive C2H2-type zinc fingers follow at residues 61-83 and 89-112; these read FLCH…QRAH and FLCV…HKLH. Disordered regions lie at residues 160–227 and 398–428; these read VQLK…KSKR and NHSH…IEKS. The segment covering 164-173 has biased composition (basic residues); sequence KAAKEKKNGK. Residues 183–202 are compositionally biased toward polar residues; that stretch reads YGANNHSTDVSPSVGNSSTP. Low complexity predominate over residues 407 to 428; sequence NNSSSGINYSNNKNNNESIEKS. A phosphoserine mark is found at S527 and S603. Positions 617-634 are enriched in low complexity; it reads SLTPSLTTQTATTQSGPG. The interval 617–636 is disordered; that stretch reads SLTPSLTTQTATTQSGPGWT.

Belongs to the RSF2/TDA9 family.

It localises to the nucleus. Functionally, DNA-binding protein that acts probably as a transcription factor. In Saccharomyces cerevisiae (strain ATCC 204508 / S288c) (Baker's yeast), this protein is Probable transcription factor TDA9 (TDA9).